A 457-amino-acid polypeptide reads, in one-letter code: tRNA modification GTPase MnmE (457 aa).

R23, E85, and R124 together coordinate (6S)-5-formyl-5,6,7,8-tetrahydrofolate. A TrmE-type G domain is found at G220–L376. N230 lines the K(+) pocket. GTP is bound by residues N230 to S235, T249 to T255, and D274 to G277. S234 lines the Mg(2+) pocket. 3 residues coordinate K(+): T249, L251, and T254. Residue T255 coordinates Mg(2+). (6S)-5-formyl-5,6,7,8-tetrahydrofolate is bound at residue K457.

It belongs to the TRAFAC class TrmE-Era-EngA-EngB-Septin-like GTPase superfamily. TrmE GTPase family. Homodimer. Heterotetramer of two MnmE and two MnmG subunits. Requires K(+) as cofactor.

The protein resides in the cytoplasm. Functionally, exhibits a very high intrinsic GTPase hydrolysis rate. Involved in the addition of a carboxymethylaminomethyl (cmnm) group at the wobble position (U34) of certain tRNAs, forming tRNA-cmnm(5)s(2)U34. This is tRNA modification GTPase MnmE from Nitratidesulfovibrio vulgaris (strain DP4) (Desulfovibrio vulgaris).